The following is a 691-amino-acid chain: DNA ligase (691 aa).

Residues 41–45, 90–91, and E130 contribute to the NAD(+) site; these read DAEYD and SL. K132 serves as the catalytic N6-AMP-lysine intermediate. NAD(+) is bound by residues R153, E190, K307, and K331. C425, C428, C443, and C449 together coordinate Zn(2+). The region spanning 610–691 is the BRCT domain; that stretch reads APQGVLAGKT…MHTLLEGHAR (82 aa).

The protein belongs to the NAD-dependent DNA ligase family. LigA subfamily. It depends on Mg(2+) as a cofactor. Requires Mn(2+) as cofactor.

It catalyses the reaction NAD(+) + (deoxyribonucleotide)n-3'-hydroxyl + 5'-phospho-(deoxyribonucleotide)m = (deoxyribonucleotide)n+m + AMP + beta-nicotinamide D-nucleotide.. Its function is as follows. DNA ligase that catalyzes the formation of phosphodiester linkages between 5'-phosphoryl and 3'-hydroxyl groups in double-stranded DNA using NAD as a coenzyme and as the energy source for the reaction. It is essential for DNA replication and repair of damaged DNA. The sequence is that of DNA ligase from Burkholderia pseudomallei (strain 668).